The chain runs to 919 residues: Puromycin-sensitive aminopeptidase (919 aa).

Substrate is bound by residues Glu-180 and 316 to 320 (GAMEN). Position 352 (His-352) interacts with Zn(2+). Glu-353 serves as the catalytic Proton acceptor. Zn(2+) is bound by residues His-356 and Glu-375. 3'-nitrotyrosine is present on Tyr-464. The Nuclear localization signal motif lies at 726–730 (RRRFK).

This sequence belongs to the peptidase M1 family. In terms of assembly, monomer. Requires Zn(2+) as cofactor. In terms of tissue distribution, detected in liver, epithelium of renal tubules, epithelium of small and large intestine, gastric epithelial cells, and alveoli of the lung (at protein level).

The protein resides in the cytoplasm. It localises to the cytosol. It is found in the nucleus. The catalysed reaction is Release of an N-terminal amino acid, preferentially alanine, from a wide range of peptides, amides and arylamides.. Its activity is regulated as follows. Strongly inhibited by bestatin, leuhistin, actinonin, amastatin, 1,10-phenanthroline, DFP, PCMBS, Zn(2+), Cd(2+), Co(2+), Cu(2+), Hg(2+), EDTA and puromycin. Not inhibited by PMSF, and only slightly inhibited by leupeptin and aprotinin. Activity is increased by Mg(2+) and Ca(2+). In terms of biological role, aminopeptidase with broad substrate specificity for several peptides. Involved in proteolytic events essential for cell growth and viability. May act as regulator of neuropeptide activity. Plays a role in the antigen-processing pathway for MHC class I molecules. Involved in the N-terminal trimming of cytotoxic T-cell epitope precursors. Digests the poly-Q peptides found in many cellular proteins. Digests tau from normal brain more efficiently than tau from Alzheimer disease brain. This chain is Puromycin-sensitive aminopeptidase (NPEPPS), found in Homo sapiens (Human).